A 430-amino-acid polypeptide reads, in one-letter code: tRNA(Ile)-lysidine synthase (430 aa).

An ATP-binding site is contributed by Ser-21–Ser-26.

This sequence belongs to the tRNA(Ile)-lysidine synthase family.

It is found in the cytoplasm. The enzyme catalyses cytidine(34) in tRNA(Ile2) + L-lysine + ATP = lysidine(34) in tRNA(Ile2) + AMP + diphosphate + H(+). Its function is as follows. Ligates lysine onto the cytidine present at position 34 of the AUA codon-specific tRNA(Ile) that contains the anticodon CAU, in an ATP-dependent manner. Cytidine is converted to lysidine, thus changing the amino acid specificity of the tRNA from methionine to isoleucine. This is tRNA(Ile)-lysidine synthase from Salmonella typhi.